Consider the following 397-residue polypeptide: Acetyl-CoA acetyltransferase, cytosolic (397 aa).

Methionine 1 is modified (N-acetylmethionine). The active-site Acyl-thioester intermediate is the cysteine 92. The residue at position 200 (lysine 200) is an N6-acetyllysine. The CoA site is built by arginine 223 and serine 226. Lysine 233 and lysine 235 each carry N6-acetyllysine. Residue serine 252 participates in CoA binding. Cysteine 383 serves as the catalytic Proton donor/acceptor.

Belongs to the thiolase-like superfamily. Thiolase family. As to quaternary structure, homotetramer.

It localises to the cytoplasm. Its subcellular location is the cytosol. The catalysed reaction is 2 acetyl-CoA = acetoacetyl-CoA + CoA. It participates in lipid metabolism; fatty acid metabolism. Its function is as follows. Involved in the biosynthetic pathway of cholesterol. This Homo sapiens (Human) protein is Acetyl-CoA acetyltransferase, cytosolic (ACAT2).